The following is a 365-amino-acid chain: Chorismate synthase (365 aa).

Residues Arg48 and Arg54 each contribute to the NADP(+) site. FMN is bound by residues 125-127 (RAS), 237-238 (NA), Gly277, 292-296 (KPTSS), and Arg318.

The protein belongs to the chorismate synthase family. Homotetramer. FMNH2 serves as cofactor.

The catalysed reaction is 5-O-(1-carboxyvinyl)-3-phosphoshikimate = chorismate + phosphate. The protein operates within metabolic intermediate biosynthesis; chorismate biosynthesis; chorismate from D-erythrose 4-phosphate and phosphoenolpyruvate: step 7/7. Catalyzes the anti-1,4-elimination of the C-3 phosphate and the C-6 proR hydrogen from 5-enolpyruvylshikimate-3-phosphate (EPSP) to yield chorismate, which is the branch point compound that serves as the starting substrate for the three terminal pathways of aromatic amino acid biosynthesis. This reaction introduces a second double bond into the aromatic ring system. In Polaromonas sp. (strain JS666 / ATCC BAA-500), this protein is Chorismate synthase.